The primary structure comprises 426 residues: Alpha-ionylideneethane synthase abl3 (426 aa).

The protein belongs to the alpha-ionylideneethane synthase family.

It participates in hormone biosynthesis. Alpha-ionylideneethane synthase; part of the gene cluster that mediates the biosynthesis of abscisic acid (ABA), a phytohormone that acts antagonistically toward salicylic acid (SA), jasmonic acid (JA) and ethylene (ETH) signaling, to impede plant defense responses. The first step of the pathway catalyzes the reaction from farnesyl diphosphate to alpha-ionylideneethane performed by the alpha-ionylideneethane synthase abl3 via a three-step reaction mechanism involving 2 neutral intermediates, beta-farnesene and allofarnesene. The cytochrome P450 monooxygenase abl1 might then be involved in the conversion of alpha-ionylideneethane to alpha-ionylideneacetic acid. Alpha-ionylideneacetic acid is further converted to abscisic acid in 2 steps involving the cytochrome P450 monooxygenase abl2 and the short-chain dehydrogenase/reductase abl4, via the intermediates 1'-deoxy-ABA or 1',4'-trans-diol-ABA, depending on the order of action of these 2 enzymes. Abl2 is responsible for the hydroxylation of carbon atom C-1' and abl4 might be involved in the oxidation of the C-4' carbon atom. The polypeptide is Alpha-ionylideneethane synthase abl3 (Leptosphaeria maculans (strain JN3 / isolate v23.1.3 / race Av1-4-5-6-7-8) (Blackleg fungus)).